The chain runs to 142 residues: Large ribosomal subunit protein bL17 (142 aa).

It belongs to the bacterial ribosomal protein bL17 family. In terms of assembly, part of the 50S ribosomal subunit. Contacts protein L32.

The polypeptide is Large ribosomal subunit protein bL17 (Protochlamydia amoebophila (strain UWE25)).